The primary structure comprises 404 residues: MTDARPRICILGGGFGGLYTALRLGQLSWEGHTPPEIVLVDQRDRFLFAPFLYELVTEEMQTWEIAPPFVELLAESGVIFRQAEVTAIDFDHQKVLLNDQDKGTESLAFDQLVIALGGQTPLPNLPGLKDYGLGFRTLEDAYKLKQKLKSLEQADAEKIRIAIVGGGYSGVELAAKLGDRLGERGRIRIIERGKEILAMSPEFNRQQAQASLSAKGIWVDTETTVTAITATDVTLQFREQEDVIPVDLVLWTVGTTVSPLIRNLALPHNDQGQLRTNAQLQVEGKTNIFALGDGAEGRDASGQLIPTTAQGAFQQTDYCAWNIWANLTGRPLLPCRYQPLGEMLALGTDGAVLSGLGIKLSGPAALLARRLVYLYRFPTWQHQLTVGLNWLTRPLGDWLKNEPS.

7-43 contributes to the FAD binding site; the sequence is RICILGGGFGGLYTALRLGQLSWEGHTPPEIVLVDQR. NADP(+) is bound at residue 159 to 195; that stretch reads IRIAIVGGGYSGVELAAKLGDRLGERGRIRIIERGKE.

It belongs to the NADH dehydrogenase family. FAD is required as a cofactor.

The enzyme catalyses demethylphylloquinone + NADPH + H(+) = demethylphylloquinol + NADP(+). Its pathway is cofactor biosynthesis; phylloquinone biosynthesis. Inhibited by dicumarol. In terms of biological role, bifunctional oxidoreductase probably ables to act both on prenyl naphthoquinones and on prenyl benzoquinones. Catalyzes the penultimate step in the biosynthesis of vitamin K1. The chain is Demethylphylloquinone reductase NdbB from Synechocystis sp. (strain ATCC 27184 / PCC 6803 / Kazusa).